The chain runs to 101 residues: Large ribosomal subunit protein uL24 (101 aa).

This sequence belongs to the universal ribosomal protein uL24 family. Part of the 50S ribosomal subunit.

Its function is as follows. One of two assembly initiator proteins, it binds directly to the 5'-end of the 23S rRNA, where it nucleates assembly of the 50S subunit. In terms of biological role, one of the proteins that surrounds the polypeptide exit tunnel on the outside of the subunit. This Streptococcus equi subsp. zooepidemicus (strain H70) protein is Large ribosomal subunit protein uL24.